Here is a 296-residue protein sequence, read N- to C-terminus: Large ribosomal subunit protein uL18B (296 aa).

Residues 251–296 (PVHEKKPKKEVKKKRWNRAKLSLEQKKDRVAQKKASFLRAQEKADS) form a disordered region. Residues 255-268 (KKPKKEVKKKRWNR) show a composition bias toward basic residues. Positions 271 to 281 (LSLEQKKDRVA) are enriched in basic and acidic residues.

The protein belongs to the universal ribosomal protein uL18 family. As to quaternary structure, component of the large ribosomal subunit (LSU). Part of a LSU subcomplex, the 5S RNP which is composed of the 5S RNA, RPL5 and RPL11.

It is found in the cytoplasm. It localises to the nucleus. The protein resides in the nucleolus. Functionally, component of the ribosome, a large ribonucleoprotein complex responsible for the synthesis of proteins in the cell. The small ribosomal subunit (SSU) binds messenger RNAs (mRNAs) and translates the encoded message by selecting cognate aminoacyl-transfer RNA (tRNA) molecules. The large subunit (LSU) contains the ribosomal catalytic site termed the peptidyl transferase center (PTC), which catalyzes the formation of peptide bonds, thereby polymerizing the amino acids delivered by tRNAs into a polypeptide chain. The nascent polypeptides leave the ribosome through a tunnel in the LSU and interact with protein factors that function in enzymatic processing, targeting, and the membrane insertion of nascent chains at the exit of the ribosomal tunnel. As part of the 5S RNP/5S ribonucleoprotein particle it is an essential component of the LSU, required for its formation and the maturation of rRNAs. It also couples ribosome biogenesis to p53/TP53 activation. As part of the 5S RNP it accumulates in the nucleoplasm and inhibits MDM2, when ribosome biogenesis is perturbed, mediating the stabilization and the activation of TP53. The protein is Large ribosomal subunit protein uL18B (rpl5-b) of Xenopus laevis (African clawed frog).